A 441-amino-acid polypeptide reads, in one-letter code: G-protein coupled receptor family C group 5 member C (441 aa).

Positions 1 to 22 (MATHKTLLMCLGLPLFFPGALA) are cleaved as a signal peptide. Over 23-49 (QNHAPPGCSPDLDPLYYNLCDRSGAWG) the chain is Extracellular. The helical transmembrane segment at 50 to 70 (IVLEAVAGAGIITTFVLTIIL) threads the bilayer. Residues 71–84 (VASLPFVQDTKKRS) lie on the Cytoplasmic side of the membrane. A helical transmembrane segment spans residues 85–105 (LLGTQVFFLLGTLGLFCLVFA). At 106–119 (CVVKPDFSTCASRR) the chain is on the extracellular side. A helical membrane pass occupies residues 120-140 (FLFGVLFAICFSCLIAHTLSL). Over 141–154 (NFLARKNHGPRGWV) the chain is Cytoplasmic. A helical transmembrane segment spans residues 155–175 (IFTVALLLTLVEVIINTEWLI). The Extracellular segment spans residues 176–207 (ITLVRGGGQVSTPGNGSADWTVTSPCAIANMD). The N-linked (GlcNAc...) asparagine glycan is linked to N190. Residues 208–228 (FVMALIYVMLLLLAAFLGAWP) traverse the membrane as a helical segment. Topologically, residues 229–240 (TLCGRFKRWRKH) are cytoplasmic. Residues 241–261 (GVFVLLTTATSIAIWVVWIVM) form a helical membrane-spanning segment. Residues 262-278 (YTYGNKQHHSPTWDDPT) lie on the Extracellular side of the membrane. A helical transmembrane segment spans residues 279–299 (LAIALAANAWTFVFFYVIPEV). Residues 300–441 (SQVTKPSPEQ…DQSPKNKTRW (142 aa)) are Cytoplasmic-facing. Phosphoserine is present on residues S343, S382, S402, and S405. Y413 carries the phosphotyrosine modification. A disordered region spans residues 419–441 (QVATPTKDGKISQDQSPKNKTRW). T422 is subject to Phosphothreonine. The segment covering 430–441 (SQDQSPKNKTRW) has biased composition (polar residues). Residue S434 is modified to Phosphoserine.

The protein belongs to the G-protein coupled receptor 3 family.

It localises to the cell membrane. This retinoic acid-inducible G-protein coupled receptor provide evidence for a possible interaction between retinoid and G-protein signaling pathways. The sequence is that of G-protein coupled receptor family C group 5 member C (Gprc5c) from Rattus norvegicus (Rat).